A 368-amino-acid polypeptide reads, in one-letter code: Phospho-N-acetylmuramoyl-pentapeptide-transferase (368 aa).

9 helical membrane-spanning segments follow: residues L50–L70, P95–G115, S117–D137, L156–W176, I183–F203, L218–A238, P242–N262, A284–L304, and T347–L367.

It belongs to the glycosyltransferase 4 family. MraY subfamily. It depends on Mg(2+) as a cofactor.

The protein localises to the cell inner membrane. It catalyses the reaction UDP-N-acetyl-alpha-D-muramoyl-L-alanyl-gamma-D-glutamyl-meso-2,6-diaminopimeloyl-D-alanyl-D-alanine + di-trans,octa-cis-undecaprenyl phosphate = di-trans,octa-cis-undecaprenyl diphospho-N-acetyl-alpha-D-muramoyl-L-alanyl-D-glutamyl-meso-2,6-diaminopimeloyl-D-alanyl-D-alanine + UMP. It participates in cell wall biogenesis; peptidoglycan biosynthesis. Catalyzes the initial step of the lipid cycle reactions in the biosynthesis of the cell wall peptidoglycan: transfers peptidoglycan precursor phospho-MurNAc-pentapeptide from UDP-MurNAc-pentapeptide onto the lipid carrier undecaprenyl phosphate, yielding undecaprenyl-pyrophosphoryl-MurNAc-pentapeptide, known as lipid I. The polypeptide is Phospho-N-acetylmuramoyl-pentapeptide-transferase (Synechococcus sp. (strain ATCC 27144 / PCC 6301 / SAUG 1402/1) (Anacystis nidulans)).